A 416-amino-acid polypeptide reads, in one-letter code: Ena/VASP-like protein (416 aa).

The 112-residue stretch at 1–112 folds into the WH1 domain; the sequence is MSEQSICQAR…NAMLFALNIM (112 aa). Residues 114–129 are compositionally biased toward polar residues; sequence SQEGGPSSQRQVQNGP. 2 disordered regions span residues 114–133 and 141–369; these read SQEG…SPDE and VMEQ…PAGS. Ser130 is modified (phosphoserine). Over residues 141 to 157 the composition is skewed to basic and acidic residues; sequence VMEQHQQQRQESLERRT. Residues 169–180 show a composition bias toward low complexity; the sequence is PSSAASAPVSCS. Residues 181–206 show a composition bias toward pro residues; that stretch reads GPPPPPPPPVPPPPTGATPPPPPPLP. The tract at residues 222–242 is EVH2 block A; it reads GLAAAIAGAKLRRVQRPEDAS. An EVH2 region spans residues 222–413; the sequence is GLAAAIAGAK…DAIRQELSGI (192 aa). The KLKR signature appears at 231-234; the sequence is KLRR. Over residues 242–253 the composition is skewed to low complexity; sequence SGGSSPSGTSKS. Phosphoserine is present on residues Ser246 and Ser259. The tract at residues 265–282 is EVH2 block B; it reads GGLMEEMNKLLAKRRKAA. Residues 299 to 320 are compositionally biased toward polar residues; the sequence is EDPSTSPSPGTRAASQPPNSSE. Phosphoserine occurs at positions 304, 306, 329, 331, 341, 349, 354, and 369. Over residues 321–331 the composition is skewed to basic and acidic residues; it reads AGRKPWERSNS. The tract at residues 342 to 362 is required for interaction with ZDHHC17; that stretch reads RTPSVAKSPEAKSPLQSQPHS. Positions 379-413 are EVH2 block C; the sequence is DLDRMKQEILEEVVRELHKVKEEIIDAIRQELSGI.

The protein belongs to the Ena/VASP family. Homotetramer. Binds to the SH3 domains of ABL1, LYN and SRC. Also binds to profilin, with preference for isoform IIa of PFN2, and the WW domain of APBB1/FE65. Binds to SEMA6A. Interacts, via the Pro-rich region, with the C-terminal SH3 domain of DNMBP. Interacts with RAPH1. Binds, via the EVH1 domain, the Pro-rich domain of Listeria monocytogenes actA. Binds, via the EVH1 domain, the Pro-rich domain of ZYX. Interacts with FYB1. Interacts with ZDHHC17. Post-translationally, phosphorylated by PKA; phosphorylation abolishes binding to SH3 domains of ABL and SRC.

It localises to the cytoplasm. The protein resides in the cytoskeleton. Its subcellular location is the stress fiber. The protein localises to the cell projection. It is found in the lamellipodium. Ena/VASP proteins are actin-associated proteins involved in a range of processes dependent on cytoskeleton remodeling and cell polarity such as axon guidance and lamellipodial and filopodial dynamics in migrating cells. EVL enhances actin nucleation and polymerization. The sequence is that of Ena/VASP-like protein (EVL) from Homo sapiens (Human).